Consider the following 168-residue polypeptide: Photosystem I assembly protein Ycf3 (168 aa).

TPR repeat units follow at residues 35–68, 72–105, and 120–153; these read AFTY…EIDP, SYIL…NPFL, and GEQA…TPGN.

This sequence belongs to the Ycf3 family.

It is found in the plastid. The protein localises to the chloroplast thylakoid membrane. Its function is as follows. Essential for the assembly of the photosystem I (PSI) complex. May act as a chaperone-like factor to guide the assembly of the PSI subunits. This chain is Photosystem I assembly protein Ycf3, found in Buxus microphylla (Littleleaf boxwood).